Consider the following 143-residue polypeptide: ATP synthase subunit b' (143 aa).

Residues 6–26 form a helical membrane-spanning segment; that stretch reads ATLPLMALQFLVLAVVLNAVF.

This sequence belongs to the ATPase B chain family. F-type ATPases have 2 components, F(1) - the catalytic core - and F(0) - the membrane proton channel. F(1) has five subunits: alpha(3), beta(3), gamma(1), delta(1), epsilon(1). F(0) has four main subunits: a(1), b(1), b'(1) and c(10-14). The alpha and beta chains form an alternating ring which encloses part of the gamma chain. F(1) is attached to F(0) by a central stalk formed by the gamma and epsilon chains, while a peripheral stalk is formed by the delta, b and b' chains.

The protein localises to the cellular thylakoid membrane. In terms of biological role, f(1)F(0) ATP synthase produces ATP from ADP in the presence of a proton or sodium gradient. F-type ATPases consist of two structural domains, F(1) containing the extramembraneous catalytic core and F(0) containing the membrane proton channel, linked together by a central stalk and a peripheral stalk. During catalysis, ATP synthesis in the catalytic domain of F(1) is coupled via a rotary mechanism of the central stalk subunits to proton translocation. Component of the F(0) channel, it forms part of the peripheral stalk, linking F(1) to F(0). The b'-subunit is a diverged and duplicated form of b found in plants and photosynthetic bacteria. The chain is ATP synthase subunit b' from Gloeothece citriformis (strain PCC 7424) (Cyanothece sp. (strain PCC 7424)).